The following is a 204-amino-acid chain: Large ribosomal subunit protein uL3 (204 aa).

This sequence belongs to the universal ribosomal protein uL3 family. As to quaternary structure, part of the 50S ribosomal subunit. Forms a cluster with proteins L14 and L19.

One of the primary rRNA binding proteins, it binds directly near the 3'-end of the 23S rRNA, where it nucleates assembly of the 50S subunit. The sequence is that of Large ribosomal subunit protein uL3 from Azobacteroides pseudotrichonymphae genomovar. CFP2.